A 381-amino-acid polypeptide reads, in one-letter code: Arogenate dehydratase/prephenate dehydratase 2, chloroplastic (381 aa).

Positions 1-32 (MAMHTVRLSPATQLHGGISSNLSPPNRKPNNS) are disordered. The N-terminal 66 residues, 1-66 (MAMHTVRLSP…DANGRDNSVR (66 aa)), are a transit peptide targeting the chloroplast. Residues 18 to 32 (ISSNLSPPNRKPNNS) are compositionally biased toward polar residues. The Prephenate dehydratase domain occupies 100-275 (RVAYQGVRGA…NVTRFLMLAR (176 aa)). In terms of domain architecture, ACT spans 289-375 (SIVFSLEEGP…TFLRVLGSYP (87 aa)).

As to expression, expressed in roots, leaves, stems, flowers and siliques. Most abundant in leaves and seeds.

The protein localises to the plastid. It is found in the chloroplast stroma. The catalysed reaction is L-arogenate + H(+) = L-phenylalanine + CO2 + H2O. The enzyme catalyses prephenate + H(+) = 3-phenylpyruvate + CO2 + H2O. Its pathway is amino-acid biosynthesis; L-phenylalanine biosynthesis; L-phenylalanine from L-arogenate: step 1/1. It functions in the pathway amino-acid biosynthesis; L-phenylalanine biosynthesis; phenylpyruvate from prephenate: step 1/1. Functionally, converts the prephenate produced from the shikimate-chorismate pathway into phenylalanine. Dehydratase that uses arogenate and prephenate as substrates. Utilzes more efficiently arogenate than prephenate. Required for chloroplast division prior to ARC5, but in an ARC3- and ARC6-dependent manner, especially involved in the Z-ring formation. The chain is Arogenate dehydratase/prephenate dehydratase 2, chloroplastic from Arabidopsis thaliana (Mouse-ear cress).